The sequence spans 54 residues: ATP synthase F(0) complex subunit 8 (54 aa).

The chain crosses the membrane as a helical span at residues 9-29 (WFMILFFSWVIFLTIIPTKII). A disordered region spans residues 35-54 (NDPTQVDAKEHKNDTWNWPW).

It belongs to the ATPase protein 8 family. As to quaternary structure, component of the ATP synthase complex composed at least of ATP5F1A/subunit alpha, ATP5F1B/subunit beta, ATP5MC1/subunit c (homooctomer), MT-ATP6/subunit a, MT-ATP8/subunit 8, ATP5ME/subunit e, ATP5MF/subunit f, ATP5MG/subunit g, ATP5MK/subunit k, ATP5MJ/subunit j, ATP5F1C/subunit gamma, ATP5F1D/subunit delta, ATP5F1E/subunit epsilon, ATP5PF/subunit F6, ATP5PB/subunit b, ATP5PD/subunit d, ATP5PO/subunit OSCP. ATP synthase complex consists of a soluble F(1) head domain (subunits alpha(3) and beta(3)) - the catalytic core - and a membrane F(0) domain - the membrane proton channel (subunits c, a, 8, e, f, g, k and j). These two domains are linked by a central stalk (subunits gamma, delta, and epsilon) rotating inside the F1 region and a stationary peripheral stalk (subunits F6, b, d, and OSCP).

Its subcellular location is the mitochondrion membrane. In terms of biological role, subunit 8, of the mitochondrial membrane ATP synthase complex (F(1)F(0) ATP synthase or Complex V) that produces ATP from ADP in the presence of a proton gradient across the membrane which is generated by electron transport complexes of the respiratory chain. ATP synthase complex consist of a soluble F(1) head domain - the catalytic core - and a membrane F(1) domain - the membrane proton channel. These two domains are linked by a central stalk rotating inside the F(1) region and a stationary peripheral stalk. During catalysis, ATP synthesis in the catalytic domain of F(1) is coupled via a rotary mechanism of the central stalk subunits to proton translocation. In vivo, can only synthesize ATP although its ATP hydrolase activity can be activated artificially in vitro. Part of the complex F(0) domain. The sequence is that of ATP synthase F(0) complex subunit 8 from Danio rerio (Zebrafish).